Consider the following 139-residue polypeptide: UPF0251 protein Csac_0224 (139 aa).

It belongs to the UPF0251 family.

The sequence is that of UPF0251 protein Csac_0224 from Caldicellulosiruptor saccharolyticus (strain ATCC 43494 / DSM 8903 / Tp8T 6331).